A 476-amino-acid polypeptide reads, in one-letter code: Probable pectin lyase F (476 aa).

An N-terminal signal peptide occupies residues M1–A20. An intrachain disulfide couples C84 to C108. N-linked (GlcNAc...) asparagine glycosylation is found at N103 and N131. Residue R258 is part of the active site. N-linked (GlcNAc...) asparagine glycans are attached at residues N277 and N318. C325 and C333 are joined by a disulfide. The N-linked (GlcNAc...) asparagine glycan is linked to N385. Residues F412–Y476 are disordered. Positions V426–A453 are enriched in polar residues. Positions N465–Y476 are enriched in basic residues.

It belongs to the polysaccharide lyase 1 family.

It is found in the secreted. It carries out the reaction Eliminative cleavage of (1-&gt;4)-alpha-D-galacturonan methyl ester to give oligosaccharides with 4-deoxy-6-O-methyl-alpha-D-galact-4-enuronosyl groups at their non-reducing ends.. Functionally, pectinolytic enzymes consist of four classes of enzymes: pectin lyase, polygalacturonase, pectin methylesterase and rhamnogalacturonase. Among pectinolytic enzymes, pectin lyase is the most important in depolymerization of pectin, since it cleaves internal glycosidic bonds of highly methylated pectins. In Aspergillus niger (strain ATCC MYA-4892 / CBS 513.88 / FGSC A1513), this protein is Probable pectin lyase F (pelF).